Reading from the N-terminus, the 78-residue chain is CDC42 small effector protein 1 (78 aa).

Residues Cys-10 and Cys-11 are each lipidated (S-palmitoyl cysteine). Residues 30 to 43 (IGEPMNFVHLTHIG) form the CRIB domain.

The protein belongs to the CDC42SE/SPEC family.

It localises to the cytoplasm. The protein localises to the cytoskeleton. The protein resides in the cell membrane. In terms of biological role, probably involved in the organization of the actin cytoskeleton by acting downstream of CDC42, inducing actin filament assembly. This is CDC42 small effector protein 1 (CDC42SE1) from Gallus gallus (Chicken).